The primary structure comprises 141 residues: Hemoglobin subunit alpha (141 aa).

The Globin domain maps to 1–141; that stretch reads VLSSTDKSNV…VSTVLTSKYR (141 aa). Ser-3 bears the Phosphoserine mark. Residues Lys-7 and Lys-11 each carry the N6-succinyllysine modification. Lys-16 carries the post-translational modification N6-acetyllysine; alternate. Lys-16 is modified (N6-succinyllysine; alternate). Tyr-24 bears the Phosphotyrosine mark. Phosphoserine is present on Ser-35. An N6-succinyllysine modification is found at Lys-40. Residue His-58 participates in O2 binding. His-87 serves as a coordination point for heme b. Ser-102 carries the phosphoserine modification. Phosphothreonine is present on Thr-108. Residues Ser-124 and Ser-131 each carry the phosphoserine modification. Phosphothreonine is present on residues Thr-134 and Thr-137. Ser-138 carries the post-translational modification Phosphoserine.

It belongs to the globin family. In terms of assembly, heterotetramer of two alpha chains and two beta chains. In terms of tissue distribution, red blood cells.

Functionally, involved in oxygen transport from the lung to the various peripheral tissues. In terms of biological role, hemopressin acts as an antagonist peptide of the cannabinoid receptor CNR1. Hemopressin-binding efficiently blocks cannabinoid receptor CNR1 and subsequent signaling. The protein is Hemoglobin subunit alpha (HBA) of Pteropus alecto (Black flying fox).